The chain runs to 458 residues: Hepatocyte nuclear factor 3-beta (458 aa).

Residues 14-93 (DWSSYYAEPE…AGAMAGMSGS (80 aa)) form a transactivation domain 1 region. The Nuclear localization signal signature appears at 106–113 (LSPSLSPL). Thr156 is modified (phosphothreonine; by PKB/AKT1). Residues 159–252 (KPPYSYISLI…ENGCYLRRQK (94 aa)) constitute a DNA-binding region (fork-head). Residues Ser212 and Ser283 each carry the phosphoserine modification. Residues 286 to 365 (QLGEAAGSAS…PGLPPEAHLK (80 aa)) are disordered. Positions 294–310 (ASETPAGTESPHSSASP) are enriched in polar residues. Residue Thr301 is modified to Phosphothreonine. 4 positions are modified to phosphoserine: Ser303, Ser306, Ser307, and Ser309. Positions 339-352 (PGQQQQAAAHLLGP) are enriched in low complexity. The tract at residues 361-458 (EAHLKPEHHY…VYSRPIMNSS (98 aa)) is transactivation domain 2. 2 positions are modified to phosphoserine: Ser437 and Ser458.

Binds DNA as a monomer. Binds TLE1. Interacts with FOXA1 and FOXA3. Interacts with PRKDC. Interacts with AKT1. Interacts with TET1; this interaction may recruit TET1 to specific genomic loci to mediate their demethylation. Post-translationally, phosphorylation on Thr-156 abolishes binding to target promoters and subsequent transcription activation upon insulin stimulation. Liver.

The protein localises to the nucleus. The protein resides in the cytoplasm. Its function is as follows. Transcription factor that is involved in embryonic development, establishment of tissue-specific gene expression and regulation of gene expression in differentiated tissues. Is thought to act as a 'pioneer' factor opening the compacted chromatin for other proteins through interactions with nucleosomal core histones and thereby replacing linker histones at target enhancer and/or promoter sites. Binds DNA with the consensus sequence 5'-[AC]A[AT]T[AG]TT[GT][AG][CT]T[CT]-3'. In embryonic development is required for notochord formation. Involved in the development of multiple endoderm-derived organ systems such as the liver, pancreas and lungs; FOXA1 and FOXA2 seem to have at least in part redundant roles. Originally described as a transcription activator for a number of liver genes such as AFP, albumin, tyrosine aminotransferase, PEPCK, etc. Interacts with the cis-acting regulatory regions of these genes. Involved in glucose homeostasis; regulates the expression of genes important for glucose sensing in pancreatic beta-cells and glucose homeostasis. Involved in regulation of fat metabolism. Acts synergistically with ONECUT1 to activate transcription of female-specific CYP2C12; the function is inhibited by growth hormone-activated STAT5B. Acts synergistically with HNF4A to activate transcription of APOA1. The polypeptide is Hepatocyte nuclear factor 3-beta (Foxa2) (Rattus norvegicus (Rat)).